The sequence spans 376 residues: Queuine tRNA-ribosyltransferase (376 aa).

The active-site Proton acceptor is the D89. Residues 89-93 (DSGGF), D143, Q194, and G221 each bind substrate. Residues 252–258 (GVGTPSN) are RNA binding. D271 (nucleophile) is an active-site residue. The segment at 276 to 280 (ARNGR) is RNA binding; important for wobble base 34 recognition. Residues C309, C311, C314, and H340 each coordinate Zn(2+).

It belongs to the queuine tRNA-ribosyltransferase family. As to quaternary structure, homodimer. Within each dimer, one monomer is responsible for RNA recognition and catalysis, while the other monomer binds to the replacement base PreQ1. It depends on Zn(2+) as a cofactor.

The enzyme catalyses 7-aminomethyl-7-carbaguanine + guanosine(34) in tRNA = 7-aminomethyl-7-carbaguanosine(34) in tRNA + guanine. It participates in tRNA modification; tRNA-queuosine biosynthesis. Catalyzes the base-exchange of a guanine (G) residue with the queuine precursor 7-aminomethyl-7-deazaguanine (PreQ1) at position 34 (anticodon wobble position) in tRNAs with GU(N) anticodons (tRNA-Asp, -Asn, -His and -Tyr). Catalysis occurs through a double-displacement mechanism. The nucleophile active site attacks the C1' of nucleotide 34 to detach the guanine base from the RNA, forming a covalent enzyme-RNA intermediate. The proton acceptor active site deprotonates the incoming PreQ1, allowing a nucleophilic attack on the C1' of the ribose to form the product. After dissociation, two additional enzymatic reactions on the tRNA convert PreQ1 to queuine (Q), resulting in the hypermodified nucleoside queuosine (7-(((4,5-cis-dihydroxy-2-cyclopenten-1-yl)amino)methyl)-7-deazaguanosine). In Clostridium acetobutylicum (strain ATCC 824 / DSM 792 / JCM 1419 / IAM 19013 / LMG 5710 / NBRC 13948 / NRRL B-527 / VKM B-1787 / 2291 / W), this protein is Queuine tRNA-ribosyltransferase.